The primary structure comprises 99 residues: Putative protein YgeP (99 aa).

In Escherichia coli (strain K12), this protein is Putative protein YgeP (ygeP).